Reading from the N-terminus, the 414-residue chain is Putative ankyrin repeat protein BB_B28 (414 aa).

ANK repeat units lie at residues 326 to 355 (NGNPIFTYAINVKAKSIINYLITKEFNINL) and 359 to 389 (NSQTALHSAIIQKYDLNFIKSLIEKGANPNI).

The protein is Putative ankyrin repeat protein BB_B28 of Borreliella burgdorferi (strain ATCC 35210 / DSM 4680 / CIP 102532 / B31) (Borrelia burgdorferi).